Here is a 249-residue protein sequence, read N- to C-terminus: Molybdate/tungstate transport system permease protein WtpB (249 aa).

Residues 1–10 are Cytoplasmic-facing; the sequence is MDRRDYLAYA. Residues 11–31 traverse the membrane as a helical segment; sequence FAGLGAFLVAFIGLPLFMIFI. Topologically, residues 32 to 56 are extracellular; sequence KQAYDLEALQRTLVDPLVIESIRNS. The region spanning 53-239 is the ABC transmembrane type-1 domain; sequence IRNSLFTATV…TISLAVFIFL (187 aa). The helical transmembrane segment at 57 to 77 threads the bilayer; the sequence is LFTATVSTLLGILFGVPLGYV. Residues 78–96 are Cytoplasmic-facing; that stretch reads LARKEFKGKNFVQALIDTP. The chain crosses the membrane as a helical span at residues 97–117; sequence IVIPHSVVGIMLLVTFSDAIL. Residue Asp-118 is a topological domain, extracellular. The chain crosses the membrane as a helical span at residues 119 to 139; the sequence is NYKGIVAVMLFVSSPFIVNSA. At 140–179 the chain is on the cytoplasmic side; it reads RDGFLSVDEKLEYVARTLGASGLRTFFSVTLPNAIHSIAS. Residues 180 to 200 form a helical membrane-spanning segment; sequence GAIMAWARAISEVGAILIVAY. Over 201–223 the chain is Extracellular; that stretch reads YPKTAQVLIMEYFNNYGLRASRP. A helical transmembrane segment spans residues 224–244; that stretch reads IAVILVTISLAVFIFLRWLVG. Residues 245-249 are Cytoplasmic-facing; the sequence is RGRNA.

It belongs to the binding-protein-dependent transport system permease family. As to quaternary structure, the complex is composed of two ATP-binding proteins (WtpC), two transmembrane proteins (WtpB) and a solute-binding protein (WtpA).

It is found in the cell membrane. In terms of biological role, part of the ABC transporter complex WtpABC involved in molybdate/tungstate import. Probably responsible for the translocation of the substrate across the membrane. This chain is Molybdate/tungstate transport system permease protein WtpB, found in Pyrococcus furiosus (strain ATCC 43587 / DSM 3638 / JCM 8422 / Vc1).